Consider the following 315-residue polypeptide: GTPase Era (315 aa).

Residues 21 to 190 form the Era-type G domain; sequence RSGFVAIVGR…QSALEARLDP (170 aa). The G1 stretch occupies residues 29-36; sequence GRPNVGKS. A GTP-binding site is contributed by 29–36; that stretch reads GRPNVGKS. Residues 55 to 59 are G2; that stretch reads QTTRN. Positions 76-79 are G3; it reads DTPG. GTP is bound by residues 76 to 80 and 138 to 141; these read DTPGI and NKQD. The G4 stretch occupies residues 138 to 141; sequence NKQD. The interval 169-171 is G5; the sequence is FSA. The region spanning 221–297 is the KH type-2 domain; it reads TRQEVPHSVA…YLKLFVKVEP (77 aa).

The protein belongs to the TRAFAC class TrmE-Era-EngA-EngB-Septin-like GTPase superfamily. Era GTPase family. Monomer.

Its subcellular location is the cytoplasm. It localises to the cell inner membrane. An essential GTPase that binds both GDP and GTP, with rapid nucleotide exchange. Plays a role in 16S rRNA processing and 30S ribosomal subunit biogenesis and possibly also in cell cycle regulation and energy metabolism. The protein is GTPase Era of Synechocystis sp. (strain ATCC 27184 / PCC 6803 / Kazusa).